The sequence spans 149 residues: Gamma-glutamylaminecyclotransferase (149 aa).

7–10 (YGTL) is a binding site for substrate. Catalysis depends on Glu-82, which acts as the Proton acceptor.

Belongs to the gamma-glutamylcyclotransferase family. In terms of assembly, monomer.

The enzyme catalyses epsilon-(gamma-L-glutamyl)-L-lysine = 5-oxo-L-proline + L-lysine. Functionally, contributes to degradation of proteins cross-linked by transglutaminases by degrading the cross-link between a lysine and a glutamic acid residue. Catalyzes the formation of 5-oxo-L-proline from L-gamma-glutamyl-L-epsilon-lysine. Inactive with L-gamma-glutamyl-alpha-amino acid substrates such as L-gamma-glutamyl-L-alpha-cysteine and L-gamma-glutamyl-L-alpha-alanine. The chain is Gamma-glutamylaminecyclotransferase (Ggact) from Mus musculus (Mouse).